The following is a 192-amino-acid chain: Outer-membrane lipoprotein LolB (192 aa).

The first 17 residues, 1-17 (MTYRTLCILAFTALISA), serve as a signal peptide directing secretion. Cys18 is lipidated: N-palmitoyl cysteine. Cys18 carries S-diacylglycerol cysteine lipidation.

This sequence belongs to the LolB family. Monomer.

It is found in the cell outer membrane. Functionally, plays a critical role in the incorporation of lipoproteins in the outer membrane after they are released by the LolA protein. The polypeptide is Outer-membrane lipoprotein LolB (Marinomonas sp. (strain MWYL1)).